The sequence spans 206 residues: Small ribosomal subunit protein uS4 (206 aa).

Positions 96-156 (GRLDNVVYRM…EKAKKQSRVK (61 aa)) constitute an S4 RNA-binding domain.

It belongs to the universal ribosomal protein uS4 family. As to quaternary structure, part of the 30S ribosomal subunit. Contacts protein S5. The interaction surface between S4 and S5 is involved in control of translational fidelity.

One of the primary rRNA binding proteins, it binds directly to 16S rRNA where it nucleates assembly of the body of the 30S subunit. In terms of biological role, with S5 and S12 plays an important role in translational accuracy. The protein is Small ribosomal subunit protein uS4 of Cronobacter sakazakii (strain ATCC BAA-894) (Enterobacter sakazakii).